The primary structure comprises 368 residues: N-acetylneuraminate epimerase (368 aa).

Residues 1-19 form the signal peptide; that stretch reads MNKTIMALAIMMASFAANA. 7 Kelch repeats span residues 40 to 84, 86 to 137, 139 to 173, 174 to 219, 222 to 265, 287 to 336, and 338 to 367; these read TVYI…AFID, NLYV…FVHN, KAYV…KINA, HYFD…VNKG, TWLI…VAGG, ENYQ…PWNN, and LLII…VTVQ. The Proton acceptor role is filled by Glu228.

This sequence belongs to the NanM family. In terms of assembly, homodimer.

The protein localises to the periplasm. The catalysed reaction is N-acetyl-alpha-neuraminate = N-acetyl-beta-neuraminate. Functionally, converts alpha-N-acetylneuranimic acid (Neu5Ac) to the beta-anomer, accelerating the equilibrium between the alpha- and beta-anomers. Probably facilitates sialidase-negative bacteria to compete successfully for limited amounts of extracellular Neu5Ac, which is likely taken up in the beta-anomer. In addition, the rapid removal of sialic acid from solution might be advantageous to the bacterium to damp down host responses. The sequence is that of N-acetylneuraminate epimerase from Shigella flexneri serotype 5b (strain 8401).